The following is a 158-amino-acid chain: 6,7-dimethyl-8-ribityllumazine synthase (158 aa).

5-amino-6-(D-ribitylamino)uracil contacts are provided by residues phenylalanine 24, 58–60 (AFE), and 82–84 (AVI). Residue 87-88 (GT) participates in (2S)-2-hydroxy-3-oxobutyl phosphate binding. Histidine 90 serves as the catalytic Proton donor. Phenylalanine 115 lines the 5-amino-6-(D-ribitylamino)uracil pocket. Arginine 129 lines the (2S)-2-hydroxy-3-oxobutyl phosphate pocket.

This sequence belongs to the DMRL synthase family. As to quaternary structure, forms an icosahedral capsid composed of 60 subunits, arranged as a dodecamer of pentamers.

The catalysed reaction is (2S)-2-hydroxy-3-oxobutyl phosphate + 5-amino-6-(D-ribitylamino)uracil = 6,7-dimethyl-8-(1-D-ribityl)lumazine + phosphate + 2 H2O + H(+). It participates in cofactor biosynthesis; riboflavin biosynthesis; riboflavin from 2-hydroxy-3-oxobutyl phosphate and 5-amino-6-(D-ribitylamino)uracil: step 1/2. Its function is as follows. Catalyzes the formation of 6,7-dimethyl-8-ribityllumazine by condensation of 5-amino-6-(D-ribitylamino)uracil with 3,4-dihydroxy-2-butanone 4-phosphate. This is the penultimate step in the biosynthesis of riboflavin. The protein is 6,7-dimethyl-8-ribityllumazine synthase of Pseudomonas putida (strain GB-1).